The sequence spans 156 residues: Small ribosomal subunit protein uS7 (156 aa).

It belongs to the universal ribosomal protein uS7 family. Part of the 30S ribosomal subunit. Contacts proteins S9 and S11.

Its function is as follows. One of the primary rRNA binding proteins, it binds directly to 16S rRNA where it nucleates assembly of the head domain of the 30S subunit. Is located at the subunit interface close to the decoding center, probably blocks exit of the E-site tRNA. This chain is Small ribosomal subunit protein uS7, found in Thermobifida fusca (strain YX).